The primary structure comprises 434 residues: GTPase Der (434 aa).

EngA-type G domains lie at 3-167 (NIVA…PEIE) and 175-350 (PRFA…ESRS). GTP contacts are provided by residues 9–16 (GRPNVGKS), 56–60 (DTGGY), 119–122 (NKVD), 181–188 (GRPNAGKS), 228–232 (DTAGI), and 293–296 (NKWD). The 84-residue stretch at 351–434 (KKIKTRQFND…VPISIFFRKK (84 aa)) folds into the KH-like domain.

This sequence belongs to the TRAFAC class TrmE-Era-EngA-EngB-Septin-like GTPase superfamily. EngA (Der) GTPase family. Associates with the 50S ribosomal subunit.

GTPase that plays an essential role in the late steps of ribosome biogenesis. The polypeptide is GTPase Der (Christiangramia forsetii (strain DSM 17595 / CGMCC 1.15422 / KT0803) (Gramella forsetii)).